The sequence spans 895 residues: Protein translocase subunit SecA (895 aa).

ATP-binding positions include Q90, 108–112 (GEGKS), and D498.

The protein belongs to the SecA family.

Its subcellular location is the plastid. It is found in the chloroplast stroma. It localises to the chloroplast thylakoid membrane. The enzyme catalyses ATP + H2O + cellular proteinSide 1 = ADP + phosphate + cellular proteinSide 2.. Functionally, has a central role in coupling the hydrolysis of ATP to the transfer of proteins across the thylakoid membrane. In Cyanidium caldarium (Red alga), this protein is Protein translocase subunit SecA.